Reading from the N-terminus, the 416-residue chain is Glutamyl-tRNA reductase (416 aa).

Residues 51-54, Ser-110, 115-117, and Gln-121 each bind substrate; these read TCNR and EPQ. The Nucleophile role is filled by Cys-52. 190–195 is a binding site for NADP(+); the sequence is GAGQTG.

This sequence belongs to the glutamyl-tRNA reductase family. Homodimer.

It catalyses the reaction (S)-4-amino-5-oxopentanoate + tRNA(Glu) + NADP(+) = L-glutamyl-tRNA(Glu) + NADPH + H(+). Its pathway is porphyrin-containing compound metabolism; protoporphyrin-IX biosynthesis; 5-aminolevulinate from L-glutamyl-tRNA(Glu): step 1/2. Catalyzes the NADPH-dependent reduction of glutamyl-tRNA(Glu) to glutamate 1-semialdehyde (GSA). This Francisella tularensis subsp. holarctica (strain OSU18) protein is Glutamyl-tRNA reductase.